Here is a 215-residue protein sequence, read N- to C-terminus: UPF0502 protein PputGB1_3531 (215 aa).

Belongs to the UPF0502 family.

The protein is UPF0502 protein PputGB1_3531 of Pseudomonas putida (strain GB-1).